Consider the following 135-residue polypeptide: Early E3 15.3 kDa protein (135 aa).

This sequence belongs to the adenoviridae E3_15 family.

Its function is as follows. Protects virus-infected cells from TNF-induced cytolysis. The polypeptide is Early E3 15.3 kDa protein (Human adenovirus B serotype 7 (HAdV-7)).